The primary structure comprises 548 residues: Multidrug efflux system permease protein Rv1217c (548 aa).

Helical transmembrane passes span 39–59, 99–119, 148–168, 178–198, 210–230, 253–273, 313–333, 359–379, 410–430, 450–470, 477–497, and 521–541; these read VSLP…YIAS, GIWK…LTVI, ALLL…LGLL, VAFG…AAVA, AVAF…DAGS, WWVL…AYRL, LLWT…VHGI, AFLA…AVSL, LAMA…AAGL, AAVQ…LFGL, VAWG…LAGF, and VPLL…AMAF.

As to quaternary structure, the complex is probably composed of two ATP-binding proteins (Rv1218c) and a transmembrane protein (Rv1217c).

The protein localises to the cell inner membrane. Functionally, probably part of the ABC transporter complex Rv1217c-Rv1218c involved in the resistance to a wide range of structurally unrelated drugs. Probably responsible for the translocation of the substrate across the membrane. In Mycobacterium tuberculosis (strain ATCC 25618 / H37Rv), this protein is Multidrug efflux system permease protein Rv1217c.